The chain runs to 536 residues: CTP synthase (536 aa).

Residues 1-268 are amidoligase domain; sequence MKSKFIFITG…GKVLCKLFNI (268 aa). Serine 14 lines the CTP pocket. Serine 14 serves as a coordination point for UTP. Residue 15-20 coordinates ATP; sequence SLGKGL. Tyrosine 55 provides a ligand contact to L-glutamine. Aspartate 72 provides a ligand contact to ATP. Aspartate 72 and glutamate 142 together coordinate Mg(2+). CTP contacts are provided by residues 149–151, 189–194, and lysine 225; these read DIE and KTKPMQ. Residues 189-194 and lysine 225 contribute to the UTP site; that span reads KTKPMQ. Residues 293 to 535 enclose the Glutamine amidotransferase type-1 domain; that stretch reads TIALVGKYVE…IKAAVDNKIN (243 aa). Glycine 356 provides a ligand contact to L-glutamine. Residue cysteine 383 is the Nucleophile; for glutamine hydrolysis of the active site. L-glutamine-binding positions include 384-387, glutamate 407, and arginine 463; that span reads LGMQ. Residues histidine 508 and glutamate 510 contribute to the active site.

This sequence belongs to the CTP synthase family. In terms of assembly, homotetramer.

It catalyses the reaction UTP + L-glutamine + ATP + H2O = CTP + L-glutamate + ADP + phosphate + 2 H(+). It carries out the reaction L-glutamine + H2O = L-glutamate + NH4(+). The enzyme catalyses UTP + NH4(+) + ATP = CTP + ADP + phosphate + 2 H(+). The protein operates within pyrimidine metabolism; CTP biosynthesis via de novo pathway; CTP from UDP: step 2/2. Its activity is regulated as follows. Allosterically activated by GTP, when glutamine is the substrate; GTP has no effect on the reaction when ammonia is the substrate. The allosteric effector GTP functions by stabilizing the protein conformation that binds the tetrahedral intermediate(s) formed during glutamine hydrolysis. Inhibited by the product CTP, via allosteric rather than competitive inhibition. Catalyzes the ATP-dependent amination of UTP to CTP with either L-glutamine or ammonia as the source of nitrogen. Regulates intracellular CTP levels through interactions with the four ribonucleotide triphosphates. This chain is CTP synthase, found in Treponema denticola (strain ATCC 35405 / DSM 14222 / CIP 103919 / JCM 8153 / KCTC 15104).